The following is a 240-amino-acid chain: Ubiquinone biosynthesis O-methyltransferase (240 aa).

R44, G64, D85, and M129 together coordinate S-adenosyl-L-methionine.

The protein belongs to the methyltransferase superfamily. UbiG/COQ3 family.

It carries out the reaction a 3-demethylubiquinol + S-adenosyl-L-methionine = a ubiquinol + S-adenosyl-L-homocysteine + H(+). The catalysed reaction is a 3-(all-trans-polyprenyl)benzene-1,2-diol + S-adenosyl-L-methionine = a 2-methoxy-6-(all-trans-polyprenyl)phenol + S-adenosyl-L-homocysteine + H(+). It participates in cofactor biosynthesis; ubiquinone biosynthesis. Functionally, O-methyltransferase that catalyzes the 2 O-methylation steps in the ubiquinone biosynthetic pathway. The polypeptide is Ubiquinone biosynthesis O-methyltransferase (Escherichia coli O6:K15:H31 (strain 536 / UPEC)).